The primary structure comprises 205 residues: Protein N-terminal glutamine amidohydrolase (205 aa).

Residues Cys-20, His-74, and Asp-90 contribute to the active site.

It belongs to the NTAQ1 family. Monomer.

The enzyme catalyses N-terminal L-glutaminyl-[protein] + H2O = N-terminal L-glutamyl-[protein] + NH4(+). Functionally, mediates the side-chain deamidation of N-terminal glutamine residues to glutamate, an important step in N-end rule pathway of protein degradation. Conversion of the resulting N-terminal glutamine to glutamate renders the protein susceptible to arginylation, polyubiquitination and degradation as specified by the N-end rule. Does not act on substrates with internal or C-terminal glutamine and does not act on non-glutamine residues in any position. The polypeptide is Protein N-terminal glutamine amidohydrolase (tun) (Drosophila ananassae (Fruit fly)).